The sequence spans 246 residues: Aquaporin SIP1-1 (246 aa).

Transmembrane regions (helical) follow at residues 13–33 and 45–65; these read AAVT…TAAV and YALL…NLLC. Positions 74–76 match the NPA 1 motif; that stretch reads NPT. 3 consecutive transmembrane segments (helical) span residues 95–115, 139–159, and 166–186; these read FPLA…AMAI, GAAA…WIIV, and IVKT…GAAY. An NPA 2 motif is present at residues 192-194; that stretch reads NPA. Residues 214 to 234 traverse the membrane as a helical segment; that stretch reads VYWICPFVGAVLAAWVFRAVF.

It belongs to the MIP/aquaporin (TC 1.A.8) family. SIP (TC 1.A.8.10) subfamily. In terms of tissue distribution, expressed in roots, leaves and anthers.

The protein localises to the membrane. Aquaporins facilitate the transport of water and small neutral solutes across cell membranes. In Oryza sativa subsp. japonica (Rice), this protein is Aquaporin SIP1-1 (SIP1-1).